A 689-amino-acid polypeptide reads, in one-letter code: Elongation factor G (689 aa).

In terms of domain architecture, tr-type G spans 9–283; it reads AKFRNIGIMA…AIVEFMPSPL (275 aa). Residues 18–25, 82–86, and 136–139 each bind GTP; these read AHIDAGKT, DTPGH, and NKMD.

Belongs to the TRAFAC class translation factor GTPase superfamily. Classic translation factor GTPase family. EF-G/EF-2 subfamily.

The protein resides in the cytoplasm. In terms of biological role, catalyzes the GTP-dependent ribosomal translocation step during translation elongation. During this step, the ribosome changes from the pre-translocational (PRE) to the post-translocational (POST) state as the newly formed A-site-bound peptidyl-tRNA and P-site-bound deacylated tRNA move to the P and E sites, respectively. Catalyzes the coordinated movement of the two tRNA molecules, the mRNA and conformational changes in the ribosome. This Clostridium botulinum (strain Kyoto / Type A2) protein is Elongation factor G.